Here is a 1063-residue protein sequence, read N- to C-terminus: Coiled-coil domain-containing protein 187 (1063 aa).

7 disordered regions span residues 1–41 (MPTL…AADW), 62–184 (RWPG…SRLH), 219–278 (RVEA…KDED), 300–319 (PPPV…PALT), 392–484 (RKGG…ERLG), 496–539 (GQAC…ATQP), and 551–658 (WEDP…LEEK). The segment covering 111–124 (SSVSSGRLSCSSGG) has biased composition (low complexity). The span at 146 to 160 (RKSDARLEQLRDKIR) shows a compositional bias: basic and acidic residues. Residues 163–181 (AWQQGSCASLGTSAPSSAS) are compositionally biased toward polar residues. Positions 219-233 (RVEAKASHGQGRELS) are enriched in basic and acidic residues. 2 stretches are compositionally biased toward basic and acidic residues: residues 431-442 (TERKHSSLERAR) and 472-484 (SFQR…ERLG). The span at 508 to 517 (QRQGPSSQRP) shows a compositional bias: low complexity. A coiled-coil region spans residues 816–851 (HLRHKQAQLQALETTAKVLKQRVDSLTAKLQGAEAL). Residues 1010 to 1030 (PRSCGKGDPADRPWAGWSGGR) are disordered.

This chain is Coiled-coil domain-containing protein 187, found in Homo sapiens (Human).